A 371-amino-acid polypeptide reads, in one-letter code: MDPDRQADIAALAATLTTVERVLDVDGLRDRIQKLEQEASDPNLWDDQSRAQKVTSELSHAQNELRRVEELRQRVEDLPVLYEMAAEEEGQDAENAGAEADAELAKLRVDIEAMEVRTLLSGEYDEREAVVTIRSGAGGVDAADWAEMLMRMYIRWAEQHDYPVEVFDTSYAEEAGIKSATFAVHAPYAYGTLSVEQGTHRLVRISPFDNQSRRQTSFADVEVLPVVETTDHIDVPETDLRVDVYRSSGPGGQSVNTTDSAVRLTHIPTGIVVTCQNEKSQLQNKVAAMRVLQAKLLARKKQEERAALDALKGDGGSSWGNQMRSYVLHPYQMVKDLRTEYEVGNPSAVLDGDIDGFLEAGIRWRNRRDDD.

Gln-253 is modified (N5-methylglutamine).

This sequence belongs to the prokaryotic/mitochondrial release factor family. Post-translationally, methylated by PrmC. Methylation increases the termination efficiency of RF2.

The protein resides in the cytoplasm. Peptide chain release factor 2 directs the termination of translation in response to the peptide chain termination codons UGA and UAA. In Mycobacterium sp. (strain JLS), this protein is Peptide chain release factor 2.